A 156-amino-acid chain; its full sequence is ATP synthase subunit b (156 aa).

The chain crosses the membrane as a helical span at residues 7–27 (IFFQMLVFFVLGWFTMKFVWP).

This sequence belongs to the ATPase B chain family. As to quaternary structure, F-type ATPases have 2 components, F(1) - the catalytic core - and F(0) - the membrane proton channel. F(1) has five subunits: alpha(3), beta(3), gamma(1), delta(1), epsilon(1). F(0) has three main subunits: a(1), b(2) and c(10-14). The alpha and beta chains form an alternating ring which encloses part of the gamma chain. F(1) is attached to F(0) by a central stalk formed by the gamma and epsilon chains, while a peripheral stalk is formed by the delta and b chains.

The protein resides in the cell inner membrane. In terms of biological role, f(1)F(0) ATP synthase produces ATP from ADP in the presence of a proton or sodium gradient. F-type ATPases consist of two structural domains, F(1) containing the extramembraneous catalytic core and F(0) containing the membrane proton channel, linked together by a central stalk and a peripheral stalk. During catalysis, ATP synthesis in the catalytic domain of F(1) is coupled via a rotary mechanism of the central stalk subunits to proton translocation. Its function is as follows. Component of the F(0) channel, it forms part of the peripheral stalk, linking F(1) to F(0). This Bordetella bronchiseptica (strain ATCC BAA-588 / NCTC 13252 / RB50) (Alcaligenes bronchisepticus) protein is ATP synthase subunit b.